The following is a 1538-amino-acid chain: Lhr helicase/uracil glycosylase (1538 aa).

The segment at 1–897 is lhr-Core; it reads MADNPDPSSL…ERRASVLSLD (897 aa). ATP-binding residues include Gln-34, Lys-57, Thr-58, Asp-179, Glu-180, Ile-398, Arg-415, and His-418. One can recognise a Helicase ATP-binding domain in the interval 38 to 235; it reads WHVAARSEHA…FLGGDRPVTV (198 aa). The short motif at 179 to 182 is the DEVH box element; sequence DEVH. The 179-residue stretch at 284–462 folds into the Helicase C-terminal domain; the sequence is GILDEVLRHR…NLTPPHNPLD (179 aa). Residues 463–552 are beta-sheet bundle; that stretch reads VLAQQTVAAA…VTSGGTIPDR (90 aa). The segment at 553-623 is WH domain; it reads GMYSVLLPEG…SARLPFWRGE (71 aa). Residues 624 to 897 form a domain 4 region; that stretch reads GNGRPAELGE…ERRASVLSLD (274 aa). The interval 898–1538 is lhr-CTD; the sequence is SELLRNLLGQ…SSSPQGLDWG (641 aa). Residues 1287–1312 are disordered; it reads SNARTSTRRSHRARRGRPVYAQPVSP. Basic residues predominate over residues 1292–1303; sequence STRRSHRARRGR.

Belongs to the Lhr helicase family. As to quaternary structure, homooligomerizes, probably a homotetramer. Ca(2+) is required as a cofactor. The cofactor is Uracil deglycosylase activity does not require a cofactor..

It catalyses the reaction Couples ATP hydrolysis with the unwinding of duplex DNA by translocating in the 3'-5' direction.. The catalysed reaction is ATP + H2O = ADP + phosphate + H(+). It carries out the reaction Hydrolyzes single-stranded DNA or mismatched double-stranded DNA and polynucleotides, releasing free uracil.. Its function is as follows. A 3'-5' helicase probably involved in DNA repair. Translocates in an ATP-dependent manner 3'-to-5' on single-stranded (ss)DNA, unwinding any encountered duplex nucleic acid. An RNA:DNA hybrid with a 3'-ssDNA loading strand is a 4.5-fold better helicase substrate than 3'-tailed double-stranded (ds)DNA; substrates where the helicase loads on a 3'-ssRNA tail (DNA:RNA and RNA:RNA) are not unwound. Unlike its M.smegmatis counterpart, the ATPase is not ssDNA-dependent. Forms a clamp around the ssDNA loading strand. Functionally, excises uracil residues from DNA; forked DNA with a dU residue is the best substrate followed by ssDNA. Inactive on dsDNA with a dU residue or DNA with an 8-oxoguanine residue. Uracil residues in DNA can arise as a result of misincorporation of dUMP residues by DNA polymerase or due to deamination of cytosine. This chain is Lhr helicase/uracil glycosylase, found in Escherichia coli (strain K12).